A 905-amino-acid polypeptide reads, in one-letter code: Sun domain-containing protein 1 (905 aa).

Disordered stretches follow at residues 1-21 (MSGD…LPLQ), 41-166 (NNTV…ILKQ), and 207-242 (QQQQ…IDNN). Residues 1–290 (MSGDYKPNYQ…NNNNKVNFKQ (290 aa)) lie on the Nuclear side of the membrane. Low complexity-rich tracts occupy residues 41 to 67 (NNTV…SSYL) and 75 to 101 (SNQI…ASSS). Residues 107 to 116 (KVDHNSHNNN) are compositionally biased toward basic and acidic residues. Positions 117 to 126 (DDDDIEDDVD) are enriched in acidic residues. The span at 129–146 (YSTNNASSNILHNRFSNS) shows a compositional bias: polar residues. Residues 170–221 (LYNHLNNQIQQQQQQQQQQQQQQQQQQQQQQQQQQQQQQQQQQQRNNNNNSN) adopt a coiled-coil conformation. Residues 207–227 (QQQQQQQRNNNNNSNSSNNNN) are compositionally biased toward low complexity. A helical membrane pass occupies residues 291–311 (AIWIFIFSVLFIGCLLGLFST). Residues 312 to 905 (NFYGIHIYFP…IEKQQQSDEL (594 aa)) are Perinuclear space-facing. 2 coiled-coil regions span residues 359 to 456 (KKNE…QLIQ) and 504 to 609 (REFN…TQQF). The region spanning 662-860 (GASIEYNALH…YRFRVHGYQI (199 aa)) is the SUN domain. Residues 864–901 (EQEQIQIIQEEQSFKQEEINQQQIEQIEQIEQIEKQQQ) are a coiled coil.

Homodimer and homooligomer.

Its subcellular location is the nucleus membrane. Functionally, may have an important role in defining the spacing of the nuclear envelope lumen. Essential for centrosome attachment to the nucleus, maintenance of correct ploidy, proper mitosis, association of the centromere cluster with the centrosome and the maintenance of genome stability. Requires direct chromatin binding for inner nuclear membrane targeting. In Dictyostelium discoideum (Social amoeba), this protein is Sun domain-containing protein 1 (sun1).